Here is a 423-residue protein sequence, read N- to C-terminus: Maintenance of mitochondrial morphology protein 1 (423 aa).

Over 1–20 (MTIPAPIPDKAESSLSFTQG) the chain is Lumenal. The helical transmembrane segment at 21-41 (LLLGQLSIVILIGAFIKFFIF) threads the bilayer. At 42–423 (GDPPSPDVTA…PGSMPGLSMT (382 aa)) the chain is on the cytoplasmic side. In terms of domain architecture, SMP-LTD spans 115–327 (QPESLDWFNV…EPRFQQIELP (213 aa)). Disordered regions lie at residues 332–372 (RKKN…KEVE) and 387–423 (SLDV…LSMT). The segment covering 355–372 (RSRDVERDLREEARKEVE) has biased composition (basic and acidic residues).

It belongs to the MMM1 family. Homodimer. Component of the ER-mitochondria encounter structure (ERMES) or MDM complex, composed of MMM1, MDM10, MDM12 and MDM34. An MMM1 homodimer associates with one molecule of MDM12 on each side in a pairwise head-to-tail manner, and the SMP-LTD domains of MMM1 and MDM12 generate a continuous hydrophobic tunnel for phospholipid trafficking.

The protein resides in the endoplasmic reticulum membrane. Functionally, component of the ERMES/MDM complex, which serves as a molecular tether to connect the endoplasmic reticulum (ER) and mitochondria. Components of this complex are involved in the control of mitochondrial shape and protein biogenesis, and function in nonvesicular lipid trafficking between the ER and mitochondria. The MDM12-MMM1 subcomplex functions in the major beta-barrel assembly pathway that is responsible for biogenesis of all outer membrane beta-barrel proteins, and acts in a late step after the SAM complex. The MDM10-MDM12-MMM1 subcomplex further acts in the TOM40-specific pathway after the action of the MDM12-MMM1 complex. Essential for establishing and maintaining the structure of mitochondria and maintenance of mtDNA nucleoids. This is Maintenance of mitochondrial morphology protein 1 from Botryotinia fuckeliana (strain B05.10) (Noble rot fungus).